A 211-amino-acid chain; its full sequence is MAIHNLACVRDERQLFSGLNEEFAPGDGVQIEGSNGAGKTLLLRILAGLTPPDAGEIRWRQRPLRQCRSDYYRELVYIGHRAAIKPVLTPRENLTFYQGITGLRNDYAIYRALEQVGLLGYEDVRAAGLSAGQQQRIALARLWLTSASLWILDEPLTAIDHQGAQALVRLFEQHCATGGMVIMTTHQPLPASRYRMRKVALRMAEATSCFG.

Residues 1–211 (MAIHNLACVR…RMAEATSCFG (211 aa)) form the ABC transporter domain. 33 to 40 (GSNGAGKT) serves as a coordination point for ATP.

This sequence belongs to the ABC transporter superfamily. CcmA exporter (TC 3.A.1.107) family. The complex is composed of two ATP-binding proteins (CcmA) and two transmembrane proteins (CcmB).

The protein localises to the cell inner membrane. It catalyses the reaction heme b(in) + ATP + H2O = heme b(out) + ADP + phosphate + H(+). Its function is as follows. Part of the ABC transporter complex CcmAB involved in the biogenesis of c-type cytochromes; once thought to export heme, this seems not to be the case, but its exact role is uncertain. Responsible for energy coupling to the transport system. This Sodalis glossinidius (strain morsitans) protein is Cytochrome c biogenesis ATP-binding export protein CcmA.